The chain runs to 79 residues: SALFLAMHYTPDTLTAFSSVTHICRDVNYGWLIRYIHANGASLFFICLYLHIGRGIYYGSYSYMETWNIGIILLFLTMA.

Helical transmembrane passes span 1–7 (SALFLAM), 31–52 (WLIRYIHANGASLFFICLYLHI), and 67–79 (WNIGIILLFLTMA). 2 residues coordinate heme b: H37 and H51.

Belongs to the cytochrome b family. As to quaternary structure, the cytochrome bc1 complex contains 11 subunits: 3 respiratory subunits (MT-CYB, CYC1 and UQCRFS1), 2 core proteins (UQCRC1 and UQCRC2) and 6 low-molecular weight proteins (UQCRH/QCR6, UQCRB/QCR7, UQCRQ/QCR8, UQCR10/QCR9, UQCR11/QCR10 and a cleavage product of UQCRFS1). This cytochrome bc1 complex then forms a dimer. Requires heme b as cofactor.

It is found in the mitochondrion inner membrane. In terms of biological role, component of the ubiquinol-cytochrome c reductase complex (complex III or cytochrome b-c1 complex) that is part of the mitochondrial respiratory chain. The b-c1 complex mediates electron transfer from ubiquinol to cytochrome c. Contributes to the generation of a proton gradient across the mitochondrial membrane that is then used for ATP synthesis. This Dipodomys panamintinus (Panamint kangaroo rat) protein is Cytochrome b (MT-CYB).